We begin with the raw amino-acid sequence, 334 residues long: Glucokinase-like protein XF_1460 (334 aa).

18–23 contacts ATP; the sequence is ADVGGT.

The protein belongs to the bacterial glucokinase family.

This chain is Glucokinase-like protein XF_1460, found in Xylella fastidiosa (strain 9a5c).